The primary structure comprises 270 residues: F-actin-capping protein subunit beta (270 aa).

It belongs to the F-actin-capping protein beta subunit family. Component of the F-actin capping complex, composed of a heterodimer of an alpha and a beta subunit.

It localises to the cytoplasm. The protein localises to the cytoskeleton. Functionally, F-actin-capping proteins bind in a Ca(2+)-independent manner to the fast growing ends of actin filaments (barbed end) thereby blocking the exchange of subunits at these ends. Unlike other capping proteins (such as gelsolin and severin), these proteins do not sever actin filaments. This is F-actin-capping protein subunit beta (cap-2) from Caenorhabditis elegans.